The chain runs to 149 residues: Flagellar assembly factor FliW (149 aa).

This sequence belongs to the FliW family. Interacts with translational regulator CsrA and flagellin(s).

The protein localises to the cytoplasm. In terms of biological role, acts as an anti-CsrA protein, binds CsrA and prevents it from repressing translation of its target genes, one of which is flagellin. Binds to flagellin and participates in the assembly of the flagellum. This chain is Flagellar assembly factor FliW, found in Thermotoga maritima (strain ATCC 43589 / DSM 3109 / JCM 10099 / NBRC 100826 / MSB8).